A 102-amino-acid polypeptide reads, in one-letter code: Co-chaperonin GroES (102 aa).

The protein belongs to the GroES chaperonin family. In terms of assembly, heptamer of 7 subunits arranged in a ring. Interacts with the chaperonin GroEL.

The protein resides in the cytoplasm. Together with the chaperonin GroEL, plays an essential role in assisting protein folding. The GroEL-GroES system forms a nano-cage that allows encapsulation of the non-native substrate proteins and provides a physical environment optimized to promote and accelerate protein folding. GroES binds to the apical surface of the GroEL ring, thereby capping the opening of the GroEL channel. The chain is Co-chaperonin GroES from Streptomyces avermitilis (strain ATCC 31267 / DSM 46492 / JCM 5070 / NBRC 14893 / NCIMB 12804 / NRRL 8165 / MA-4680).